The chain runs to 284 residues: MEMO1 family protein MmarC6_1286 (284 aa).

The protein belongs to the MEMO1 family.

This is MEMO1 family protein MmarC6_1286 from Methanococcus maripaludis (strain C6 / ATCC BAA-1332).